Reading from the N-terminus, the 112-residue chain is Large ribosomal subunit protein bL17 (112 aa).

The protein belongs to the bacterial ribosomal protein bL17 family. In terms of assembly, part of the 50S ribosomal subunit. Contacts protein L32.

This is Large ribosomal subunit protein bL17 from Heliobacterium modesticaldum (strain ATCC 51547 / Ice1).